The chain runs to 1239 residues: Erythroid differentiation-related factor 1 (1239 aa).

Disordered regions lie at residues 1–39, 219–269, 517–559, and 620–646; these read MGDP…QGSA, AQPV…REPL, PKKE…DPAD, and KKES…TRGG. Low complexity-rich tracts occupy residues 9-28 and 253-263; these read AEAS…LSQA and SSVSEDPSASS. The span at 530–547 shows a compositional bias: acidic residues; that stretch reads NSDESYSEEEEEMADSDE. TPR repeat units follow at residues 693-726 and 914-953; these read SKAY…HDTY and AQAH…LGTR.

It is found in the nucleus. In terms of biological role, transcription factor involved in erythroid differentiation. Involved in transcriptional activation of the globin gene. The sequence is that of Erythroid differentiation-related factor 1 (Edrf1) from Mus musculus (Mouse).